Reading from the N-terminus, the 348-residue chain is MKKTDELRTIRIDPLITPSELAKKYAITSEIMDNVIITRQNIARIMTGEDLRLLVVIGPCSVHDPIAAVEYAHRLYELRKKYQDRLEIIMRTYFEKPRTVVGWKGLISDPDLNGSFRVNHGLAVARKLLLDINELGMPAATEFLDMVIGQFIADLISWGAIGARTTESQIHREMASALSCPVGFKNGTDGNIRIAIDAIRAAQARHLFFAPNKDGQMTINHTSGNPYGHIIMRGGRTPNYHAHDINSAIEHLREFNLLEHLMIDFSHGNCLKEHIRQKDVAKSVSKQISQGSKTIFGVMIESFLEEGFQTVKENQPLIYGKSITDACLNWKDSVLIIKQLADAVDTRF.

This sequence belongs to the class-I DAHP synthase family.

It carries out the reaction D-erythrose 4-phosphate + phosphoenolpyruvate + H2O = 7-phospho-2-dehydro-3-deoxy-D-arabino-heptonate + phosphate. It functions in the pathway metabolic intermediate biosynthesis; chorismate biosynthesis; chorismate from D-erythrose 4-phosphate and phosphoenolpyruvate: step 1/7. Functionally, stereospecific condensation of phosphoenolpyruvate (PEP) and D-erythrose-4-phosphate (E4P) giving rise to 3-deoxy-D-arabino-heptulosonate-7-phosphate (DAHP). In Buchnera aphidicola subsp. Schizaphis graminum (strain Sg), this protein is Phospho-2-dehydro-3-deoxyheptonate aldolase, Trp-sensitive (aroH).